Here is a 253-residue protein sequence, read N- to C-terminus: Alpha-acetolactate decarboxylase (253 aa).

The protein belongs to the alpha-acetolactate decarboxylase family.

The catalysed reaction is (2S)-2-acetolactate + H(+) = (R)-acetoin + CO2. It functions in the pathway polyol metabolism; (R,R)-butane-2,3-diol biosynthesis; (R,R)-butane-2,3-diol from pyruvate: step 2/3. In terms of biological role, converts acetolactate into acetoin. This chain is Alpha-acetolactate decarboxylase (alsD), found in Bacillus licheniformis (strain ATCC 14580 / DSM 13 / JCM 2505 / CCUG 7422 / NBRC 12200 / NCIMB 9375 / NCTC 10341 / NRRL NRS-1264 / Gibson 46).